We begin with the raw amino-acid sequence, 530 residues long: Poly(U)-binding-splicing factor PUF60 (530 aa).

The tract at residues 1-487 is inhibits homodimerization; that stretch reads MATATIALGT…EDAEIIVKIF (487 aa). Lys-14 is covalently cross-linked (Glycyl lysine isopeptide (Lys-Gly) (interchain with G-Cter in SUMO2)). Thr-31 bears the Phosphothreonine mark. The tract at residues 48-530 is inhibits transcriptional repression, interaction with ERCC3 and apoptosis induction; it reads QSIKSVLVKQ…ERFDNSDLSA (483 aa). A Glycyl lysine isopeptide (Lys-Gly) (interchain with G-Cter in SUMO2) cross-link involves residue Lys-51. Ser-83 is subject to Phosphoserine. 2 RRM domains span residues 100–178 and 197–275; these read CRVY…RPSN and NRIY…KAVT. Ser-215 is modified (phosphoserine). Lys-222 carries the N6-acetyllysine modification. A Phosphothreonine modification is found at Thr-285. The tract at residues 387–408 is disordered; that stretch reads KKEKEEEELFPESERPEMLSEQ. A Glycyl lysine isopeptide (Lys-Gly) (interchain with G-Cter in SUMO2) cross-link involves residue Lys-390. Residues 398–408 show a composition bias toward basic and acidic residues; it reads ESERPEMLSEQ. Lys-425 is modified (N6-acetyllysine). Residue Lys-429 forms a Glycyl lysine isopeptide (Lys-Gly) (interchain with G-Cter in SUMO2) linkage. In terms of domain architecture, RRM 3; atypical spans 433–520; sequence TVMVLRNMVD…RKVVAEVYDQ (88 aa).

Belongs to the RRM half pint family. Homodimer. Associates with the spliceosome. Found in a complex with RO60 and Y5 RNA. Found in a complex with FUBP1 and far upstream element (FUSE) DNA segment. Interacts directly with ERCC3. Interacts with CDK7 and GTF2H1. Interacts with SRSF11/P54. Interacts with ARGLU1; interaction may be involved in ARGLU1-mediated modulation of alternative splicing.

It localises to the nucleus. DNA- and RNA-binding protein, involved in several nuclear processes such as pre-mRNA splicing, apoptosis and transcription regulation. In association with FUBP1 regulates MYC transcription at the P2 promoter through the core-TFIIH basal transcription factor. Acts as a transcriptional repressor through the core-TFIIH basal transcription factor. Represses FUBP1-induced transcriptional activation but not basal transcription. Decreases ERCC3 helicase activity. Is also involved in pre-mRNA splicing. Promotes splicing of an intron with weak 3'-splice site and pyrimidine tract in a cooperative manner with U2AF2. Involved in apoptosis induction when overexpressed in HeLa cells. Modulates alternative splicing of several mRNAs. Binds to relaxed DNA of active promoter regions. Binds to the pyrimidine tract and 3'-splice site regions of pre-mRNA; binding is enhanced in presence of U2AF2. Binds to Y5 RNA in association with RO60. Binds to poly(U) RNA. The polypeptide is Poly(U)-binding-splicing factor PUF60 (Bos taurus (Bovine)).